The chain runs to 157 residues: Small ribosomal subunit protein uS7 (157 aa).

The protein belongs to the universal ribosomal protein uS7 family. Part of the 30S ribosomal subunit. Contacts proteins S9 and S11.

One of the primary rRNA binding proteins, it binds directly to 16S rRNA where it nucleates assembly of the head domain of the 30S subunit. Is located at the subunit interface close to the decoding center, probably blocks exit of the E-site tRNA. In Borreliella afzelii (strain PKo) (Borrelia afzelii), this protein is Small ribosomal subunit protein uS7.